A 616-amino-acid chain; its full sequence is uncharacterized protein (616 aa).

Disordered regions lie at residues 166-243 (SRTY…TPEL) and 272-298 (DHEEEEGQDDDEETEIEIDRGGPIEEI). A compositionally biased stretch (basic and acidic residues) spans 184-200 (RVDESRPSENSSRHDYV). The segment covering 221–237 (TRTSNVTQTQPPTNQVF) has biased composition (polar residues). The span at 272–287 (DHEEEEGQDDDEETEI) shows a compositional bias: acidic residues. Residues 343–417 (ILIKLKFMND…VHCHISTTPY (75 aa)) form the Ubiquitin-like domain.

This is an uncharacterized protein from Caenorhabditis elegans.